Here is a 176-residue protein sequence, read N- to C-terminus: Woronin body major protein (176 aa).

The propeptide occupies 1–16; it reads MGYYDDDAHGHVEADA. Residues 1–16 are compositionally biased toward basic and acidic residues; that stretch reads MGYYDDDAHGHVEADA. A disordered region spans residues 1–31; that stretch reads MGYYDDDAHGHVEADAAPRATTGTGTGSASQ. The Microbody targeting signal signature appears at 174 to 176; sequence SRL.

This sequence belongs to the eIF-5A family. Hex1 subfamily. As to quaternary structure, forms oligomers. Self-assembles into hexagonal rods.

Its subcellular location is the cell septum. Major component of Woronin bodies, fungal-specific organelles that occlude septal pores in order to separate intact from damaged compartments. Hex-1 binds directly or indirectly to the Woronin body tether that in turn is anchored at the rim of the septal pore. The chain is Woronin body major protein from Neurospora crassa (strain ATCC 24698 / 74-OR23-1A / CBS 708.71 / DSM 1257 / FGSC 987).